The chain runs to 331 residues: Putative sigma L-dependent transcriptional regulator YplP (331 aa).

The Sigma-54 factor interaction domain maps to 12 to 213; sequence HLIGEHQTFL…LKNAADYMAA (202 aa). Residue 95 to 104 coordinates ATP; the sequence is AVRGTLFLDD.

Functionally, may play a role in cold adaptation. This is Putative sigma L-dependent transcriptional regulator YplP (yplP) from Bacillus subtilis (strain 168).